The primary structure comprises 259 residues: Glutathione S-transferase domain-containing protein DDB_G0274705 (259 aa).

In terms of domain architecture, GST N-terminal spans 7-96; that stretch reads KIDYIFYTNN…YLAQKFNTFL (90 aa). The 131-residue stretch at 102 to 232 folds into the GST C-terminal domain; sequence NPLENSEVIT…GFKNFNPSLL (131 aa).

It belongs to the GST superfamily.

The polypeptide is Glutathione S-transferase domain-containing protein DDB_G0274705 (Dictyostelium discoideum (Social amoeba)).